The following is a 189-amino-acid chain: Elongation factor P (189 aa).

This sequence belongs to the elongation factor P family.

The protein localises to the cytoplasm. Its pathway is protein biosynthesis; polypeptide chain elongation. In terms of biological role, involved in peptide bond synthesis. Stimulates efficient translation and peptide-bond synthesis on native or reconstituted 70S ribosomes in vitro. Probably functions indirectly by altering the affinity of the ribosome for aminoacyl-tRNA, thus increasing their reactivity as acceptors for peptidyl transferase. In Rhizobium leguminosarum bv. trifolii (strain WSM2304), this protein is Elongation factor P.